The primary structure comprises 196 residues: Cell division protein SepF (196 aa).

Residues 16–81 are disordered; sequence EDDEEFNEPA…KRAGSTFTKP (66 aa). Positions 56–69 are enriched in polar residues; it reads RPAQSTSKAQTQTA.

Belongs to the SepF family. Homodimer. Interacts with FtsZ.

It localises to the cytoplasm. Cell division protein that is part of the divisome complex and is recruited early to the Z-ring. Probably stimulates Z-ring formation, perhaps through the cross-linking of FtsZ protofilaments. Its function overlaps with FtsA. In Lactococcus lactis subsp. lactis (strain IL1403) (Streptococcus lactis), this protein is Cell division protein SepF.